The sequence spans 130 residues: Ribosome biogenesis inhibitor MINAS-60 (130 aa).

A disordered region spans residues 61–130 (SRVRRIPTRP…RRRRPVTSSC (70 aa)). Basic residues predominate over residues 109–130 (KGRRRRRRRMRRRRRRPVTSSC).

As to quaternary structure, interacts with 60S ribosome assembly factors GTPBP4 and MRTO4.

The protein localises to the nucleus. It localises to the nucleolus. Its function is as follows. Acts as a late-stage inhibitor of pre-60S ribosome assembly by preventing pre-60S ribosome export from nucleus. The polypeptide is Ribosome biogenesis inhibitor MINAS-60 (Homo sapiens (Human)).